A 232-amino-acid polypeptide reads, in one-letter code: Large ribosomal subunit protein uL1 (232 aa).

This sequence belongs to the universal ribosomal protein uL1 family. As to quaternary structure, part of the 50S ribosomal subunit.

Its function is as follows. Binds directly to 23S rRNA. The L1 stalk is quite mobile in the ribosome, and is involved in E site tRNA release. In terms of biological role, protein L1 is also a translational repressor protein, it controls the translation of the L11 operon by binding to its mRNA. The sequence is that of Large ribosomal subunit protein uL1 from Bacillus cereus (strain ATCC 14579 / DSM 31 / CCUG 7414 / JCM 2152 / NBRC 15305 / NCIMB 9373 / NCTC 2599 / NRRL B-3711).